The sequence spans 654 residues: Endoplasmic reticulum chaperone BiP (654 aa).

The N-terminal stretch at 1–18 (MKFPMVAAALLLLCAVRA) is a signal peptide. A required for interaction with ELAPOR1 region spans residues 1–80 (MKFPMVAAAL…EGERLIGDAA (80 aa)). 36 to 39 (GTTY) is an ATP binding site. Position 86 is a phosphoserine (Ser86). Lys96 lines the ATP pocket. Lys125 is subject to N6-acetyllysine. The tract at residues 125-280 (KPYIQVDIGG…KKKTGKDVRK (156 aa)) is nucleotide-binding (NBD). Tyr160 carries the 3'-nitrotyrosine modification. Lys213 carries the N6-acetyllysine modification. 227–229 (GGT) lines the ATP pocket. N6-acetyllysine is present on Lys271. 293 to 300 (EKAKRALS) serves as a coordination point for ATP. Lys326 bears the N6-acetyllysine mark. A Glycyl lysine isopeptide (Lys-Gly) (interchain with G-Cter in SUMO2) cross-link involves residue Lys352. Lys353 bears the N6-acetyllysine; alternate mark. Lys353 participates in a covalent cross-link: Glycyl lysine isopeptide (Lys-Gly) (interchain with G-Cter in SUMO1); alternate. 364-367 (GSTR) contacts ATP. The segment at 409–419 (QDTGDLVLLDV) is interdomain linker. Positions 420–500 (CPLTLGIETV…PRGVPQIEVT (81 aa)) are substrate-binding (SBD). Residue Lys447 is modified to N6-succinyllysine. Arg492 is subject to Omega-N-methylarginine. Thr518 carries the post-translational modification O-AMP-threonine; alternate. Residue Thr518 is modified to Phosphothreonine; alternate. Lys585 is modified (N6,N6,N6-trimethyllysine; by METTL21A; in vitro). Lys585 is subject to N6,N6-dimethyllysine; alternate. An N6-methyllysine; alternate modification is found at Lys585. The residue at position 591 (Lys591) is an N6-methyllysine. The tract at residues 632-654 (SKLYGSAGPPPTGEEDTSEKDEL) is disordered. Thr643 and Thr648 each carry phosphothreonine. Residues 644–654 (GEEDTSEKDEL) show a composition bias toward acidic residues. A Phosphoserine modification is found at Ser649. The short motif at 651 to 654 (KDEL) is the Prevents secretion from ER element.

Belongs to the heat shock protein 70 family. As to quaternary structure, monomer and homooligomer; homooligomerization via the interdomain linker inactivates the chaperone activity and acts as a storage of HSPA5/BiP molecules. Interacts with DNAJC1 (via J domain). Component of an EIF2 complex at least composed of CELF1/CUGBP1, CALR, CALR3, EIF2S1, EIF2S2, HSP90B1 and HSPA5. Part of a large chaperone multiprotein complex comprising DNAJB11, HSP90B1, HSPA5, HYOU, PDIA2, PDIA4, PDIA6, PPIB, SDF2L1, UGGT1 and very small amounts of ERP29, but not, or at very low levels, CALR nor CANX. Interacts with TMEM132A and TRIM21. May form a complex with ERLEC1, OS9, SEL1L and SYVN1. Interacts with DNAJC10. Interacts with DNAJB9/ERdj4; leading to recruit HSPA5/BiP to ERN1/IRE1. Interacts with ERN1/IRE1 (via luminal domain); the interaction takes place following interaction with DNAJB9/ERdj4 and leads to inactivate ERN1/IRE1, the interaction also competitively inhibits ERN1 interaction with MANF. Interacts directly with MANF (via SAP domain); the interaction inhibits ATP binding to HSPA5/BiP and subsequent nucleotide exchange. Interacts with EIF2AK3/PERK (via luminal domain); interaction leads to inactivate EIF2AK3/PERK. Interacts with MX1. Interacts with METTL23. Interacts with CEMIP; the interaction induces calcium leakage from the endoplasmic reticulum and cell migration. Interacts with PCSK4 form; the interaction takes place in the endoplasmic reticulum. Interacts with CIPC. Interacts with CCDC88B (via C-terminus); the interaction opposes ERN1-mediated JNK activation, protecting against apoptosis. Interacts with INPP5K; necessary for INPP5K localization at the endoplasmic reticulum. Interacts with LOXL2; leading to activate the ERN1/IRE1-XBP1 pathway of the unfolded protein response. Interacts with CLU under stressed condition; interaction increases CLU protein stability; facilitates its retrotranslocation and redistribution to the mitochondria; cooperatively suppress stress-induced apoptosis by stabilizing mitochondrial membrane integrity. Interacts with CCDC47. Interacts with CLN3. Interacts with ELAPOR1; may regulate the function of HSPA5 in apoptosis and cell proliferation. Interacts with CASP7. Interacts with ILDR2; the interaction stabilizes ILDR2 expression. Interacts with ADAM7. Post-translationally, in unstressed cells, AMPylation at Thr-518 by FICD inactivates the chaperome activity: AMPylated form is locked in a relatively inert state and only weakly stimulated by J domain-containing proteins. In response to endoplasmic reticulum stress, de-AMPylation by the same protein, FICD, restores the chaperone activity.

It localises to the endoplasmic reticulum lumen. The protein resides in the melanosome. Its subcellular location is the cytoplasm. The protein localises to the cell surface. It catalyses the reaction ATP + H2O = ADP + phosphate + H(+). With respect to regulation, the chaperone activity is regulated by ATP-induced allosteric coupling of the nucleotide-binding (NBD) and substrate-binding (SBD) domains. In the ADP-bound and nucleotide-free (apo) states, the two domains have little interaction. In contrast, in the ATP-bound state the two domains are tightly coupled, which results in drastically accelerated kinetics in both binding and release of polypeptide substrates. J domain-containing co-chaperones (DNAJB9/ERdj4 or DNAJC10/ERdj5) stimulate the ATPase activity and are required for efficient substrate recognition by HSPA5/BiP. Homooligomerization inactivates participating HSPA5/BiP protomers and probably act as reservoirs to store HSPA5/BiP molecules when they are not needed by the cell. Its function is as follows. Endoplasmic reticulum chaperone that plays a key role in protein folding and quality control in the endoplasmic reticulum lumen. Involved in the correct folding of proteins and degradation of misfolded proteins via its interaction with DNAJC10/ERdj5, probably to facilitate the release of DNAJC10/ERdj5 from its substrate. Acts as a key repressor of the EIF2AK3/PERK and ERN1/IRE1-mediated unfolded protein response (UPR). In the unstressed endoplasmic reticulum, recruited by DNAJB9/ERdj4 to the luminal region of ERN1/IRE1, leading to disrupt the dimerization of ERN1/IRE1, thereby inactivating ERN1/IRE1. Also binds and inactivates EIF2AK3/PERK in unstressed cells. Accumulation of misfolded protein in the endoplasmic reticulum causes release of HSPA5/BiP from ERN1/IRE1 and EIF2AK3/PERK, allowing their homodimerization and subsequent activation. Plays an auxiliary role in post-translational transport of small presecretory proteins across endoplasmic reticulum (ER). May function as an allosteric modulator for SEC61 channel-forming translocon complex, likely cooperating with SEC62 to enable the productive insertion of these precursors into SEC61 channel. Appears to specifically regulate translocation of precursors having inhibitory residues in their mature region that weaken channel gating. May also play a role in apoptosis and cell proliferation. The sequence is that of Endoplasmic reticulum chaperone BiP from Cricetulus griseus (Chinese hamster).